The primary structure comprises 180 residues: Acireductone dioxygenase (180 aa).

His97, His99, Glu103, and His141 together coordinate Fe(2+). Ni(2+) contacts are provided by His97, His99, Glu103, and His141.

This sequence belongs to the acireductone dioxygenase (ARD) family. Monomer. Requires Fe(2+) as cofactor. The cofactor is Ni(2+).

The enzyme catalyses 1,2-dihydroxy-5-(methylsulfanyl)pent-1-en-3-one + O2 = 3-(methylsulfanyl)propanoate + CO + formate + 2 H(+). It catalyses the reaction 1,2-dihydroxy-5-(methylsulfanyl)pent-1-en-3-one + O2 = 4-methylsulfanyl-2-oxobutanoate + formate + 2 H(+). It functions in the pathway amino-acid biosynthesis; L-methionine biosynthesis via salvage pathway; L-methionine from S-methyl-5-thio-alpha-D-ribose 1-phosphate: step 5/6. Functionally, catalyzes 2 different reactions between oxygen and the acireductone 1,2-dihydroxy-3-keto-5-methylthiopentene (DHK-MTPene) depending upon the metal bound in the active site. Fe-containing acireductone dioxygenase (Fe-ARD) produces formate and 2-keto-4-methylthiobutyrate (KMTB), the alpha-ketoacid precursor of methionine in the methionine recycle pathway. Ni-containing acireductone dioxygenase (Ni-ARD) produces methylthiopropionate, carbon monoxide and formate, and does not lie on the methionine recycle pathway. This chain is Acireductone dioxygenase, found in Enterobacter sp. (strain 638).